We begin with the raw amino-acid sequence, 295 residues long: 33 kDa chaperonin (295 aa).

2 disulfide bridges follow: Cys238-Cys240 and Cys271-Cys274.

This sequence belongs to the HSP33 family. Post-translationally, under oxidizing conditions two disulfide bonds are formed involving the reactive cysteines. Under reducing conditions zinc is bound to the reactive cysteines and the protein is inactive.

It localises to the cytoplasm. Its function is as follows. Redox regulated molecular chaperone. Protects both thermally unfolding and oxidatively damaged proteins from irreversible aggregation. Plays an important role in the bacterial defense system toward oxidative stress. This chain is 33 kDa chaperonin, found in Levilactobacillus brevis (strain ATCC 367 / BCRC 12310 / CIP 105137 / JCM 1170 / LMG 11437 / NCIMB 947 / NCTC 947) (Lactobacillus brevis).